The primary structure comprises 892 residues: Translation initiation factor IF-2 (892 aa).

The segment at 65-296 is disordered; the sequence is KTRSTLNIPS…KGKRKPSTLQ (232 aa). Over residues 68–82 the composition is skewed to polar residues; the sequence is STLNIPSTGGKSKSV. Residues 99 to 217 show a composition bias toward basic and acidic residues; it reads EQAKAEEQAQ…KMAAENEGKW (119 aa). Residues 224–237 are compositionally biased toward polar residues; that stretch reads QTESADYHVTTSQH. Residues 239–254 are compositionally biased toward basic and acidic residues; sequence RAAEDENDAKVEGDRR. A compositionally biased stretch (basic residues) spans 255 to 269; sequence SRTRGGKATKQKKGN. Positions 270 to 283 are enriched in basic and acidic residues; it reads KLSESKADREEARA. A tr-type G domain is found at 391 to 560; the sequence is HRAPVVTIMG…LLQAEVLELK (170 aa). A G1 region spans residues 400–407; it reads GHVDHGKT. GTP is bound at residue 400 to 407; it reads GHVDHGKT. A G2 region spans residues 425-429; the sequence is GITQH. The segment at 446-449 is G3; sequence DTPG. GTP is bound by residues 446–450 and 500–503; these read DTPGH and NKID. The G4 stretch occupies residues 500–503; it reads NKID. Positions 536-538 are G5; it reads SAK.

This sequence belongs to the TRAFAC class translation factor GTPase superfamily. Classic translation factor GTPase family. IF-2 subfamily.

It localises to the cytoplasm. Functionally, one of the essential components for the initiation of protein synthesis. Protects formylmethionyl-tRNA from spontaneous hydrolysis and promotes its binding to the 30S ribosomal subunits. Also involved in the hydrolysis of GTP during the formation of the 70S ribosomal complex. In Yersinia pseudotuberculosis serotype O:1b (strain IP 31758), this protein is Translation initiation factor IF-2.